A 55-amino-acid chain; its full sequence is Riparin-1.5 acid (55 aa).

The N-terminal stretch at 1–15 is a signal peptide; the sequence is MKIIVFLAVLMLVSA. The propeptide occupies 16 to 41; the sequence is QVCLVSAAEMEHSSDNELSSRDLVKR. An intrachain disulfide couples Cys47 to Cys53. Positions 54-55 are excised as a propeptide; that stretch reads NH.

Expressed by the skin glands.

The protein resides in the secreted. This is Riparin-1.5 acid from Crinia riparia (Streambank froglet).